A 218-amino-acid polypeptide reads, in one-letter code: Recombination protein RecR (218 aa).

A C4-type zinc finger spans residues 56–71 (CRICCNISREEVCRIC). The region spanning 79–195 (STICVVEEPK…VVSRLASGMP (117 aa)) is the Toprim domain.

The protein belongs to the RecR family.

Functionally, may play a role in DNA repair. It seems to be involved in an RecBC-independent recombinational process of DNA repair. It may act with RecF and RecO. The chain is Recombination protein RecR from Corynebacterium diphtheriae (strain ATCC 700971 / NCTC 13129 / Biotype gravis).